Consider the following 423-residue polypeptide: Tyrosine--tRNA ligase (423 aa).

Residue tyrosine 35 participates in L-tyrosine binding. The 'HIGH' region motif lies at 40-49; it reads PTAPSLHAGH. Positions 170 and 174 each coordinate L-tyrosine. Positions 230-234 match the 'KMSKS' region motif; it reads KFGKS. Residue lysine 233 participates in ATP binding. In terms of domain architecture, S4 RNA-binding spans 355–412; the sequence is DLITDLLVATGLSASKGAARRTIAEGGVSVNNVKIDSDEWTPQASDFLHGRWLVLRRG.

This sequence belongs to the class-I aminoacyl-tRNA synthetase family. TyrS type 1 subfamily. As to quaternary structure, homodimer.

The protein localises to the cytoplasm. The catalysed reaction is tRNA(Tyr) + L-tyrosine + ATP = L-tyrosyl-tRNA(Tyr) + AMP + diphosphate + H(+). Catalyzes the attachment of tyrosine to tRNA(Tyr) in a two-step reaction: tyrosine is first activated by ATP to form Tyr-AMP and then transferred to the acceptor end of tRNA(Tyr). This Mycobacterium sp. (strain JLS) protein is Tyrosine--tRNA ligase.